Here is a 1086-residue protein sequence, read N- to C-terminus: Receptor-type guanylate cyclase gcy-6 (1086 aa).

The first 21 residues, 1–21 (MIGVYLRSVIFPLLFVIQTIC), serve as a signal peptide directing secretion. Over 22–487 (QPPGNVFHLG…PANVFFQYIG (466 aa)) the chain is Extracellular. N325, N343, N387, and N427 each carry an N-linked (GlcNAc...) asparagine glycan. Residues 488–508 (WFIAAIIIIFFTIMGAILAFI) form a helical membrane-spanning segment. At 509 to 1086 (YLCHAKQQEV…APKILKKKQD (578 aa)) the chain is on the cytoplasmic side. Residues 560-836 (SSTLSEVGET…NDNLMDHVFN (277 aa)) form the Protein kinase domain. ATP contacts are provided by residues 566–574 (VGETRNYLF) and K589. In terms of domain architecture, Guanylate cyclase spans 894 to 1024 (TLFFSDVVSF…DAVNTASRME (131 aa)).

Belongs to the adenylyl cyclase class-4/guanylyl cyclase family. Expressed in both ASEL and ASER neurons throughout late embryonic and early larval stages. In adults, expressed asymmetrically in ASE left (ASEL) sensory neuron.

It localises to the cell membrane. It carries out the reaction GTP = 3',5'-cyclic GMP + diphosphate. Its function is as follows. Guanylate cyclase involved in the production of the second messenger cGMP. Regulates chemotaxis responses toward the salt ion Mg(2+) and to a lesser extent toward Cl(1-) in ASE left (ASEL) sensory neuron. This is Receptor-type guanylate cyclase gcy-6 from Caenorhabditis elegans.